We begin with the raw amino-acid sequence, 199 residues long: Cutinase CUT1 (199 aa).

Residues 1-18 (MKFTTLATLALGAVSALA) form the signal peptide. Positions 19–27 (APVTELESR) are excised as a propeptide. Q28 is subject to Pyrrolidone carboxylic acid. C31 and C105 are joined by a disulfide. Catalysis depends on S116, which acts as the Nucleophile. An intrachain disulfide couples C164 to C171. Residue D168 is part of the active site. H181 functions as the Proton donor/acceptor in the catalytic mechanism.

Belongs to the cutinase family. The 2 disulfide bonds play a critical role in holding the catalytic residues in juxta-position; reduction of the disulfide bridges results in the complete inactivation of the enzyme.

The catalysed reaction is cutin + H2O = cutin monomers.. In terms of biological role, catalyzes the hydrolysis of complex carboxylic polyesters found in the cell wall of plants. Degrades cutin, a macromolecule that forms the structure of the plant cuticle. Also degrades suberin, a specialized macromolecule found in the cell wall of various plant tissues. The polypeptide is Cutinase CUT1 (Coprinopsis cinerea (Inky cap fungus)).